A 209-amino-acid chain; its full sequence is Uridine kinase (209 aa).

Residue 12–19 (GGSGSGKT) participates in ATP binding.

Belongs to the uridine kinase family.

It localises to the cytoplasm. It carries out the reaction uridine + ATP = UMP + ADP + H(+). It catalyses the reaction cytidine + ATP = CMP + ADP + H(+). Its pathway is pyrimidine metabolism; CTP biosynthesis via salvage pathway; CTP from cytidine: step 1/3. It functions in the pathway pyrimidine metabolism; UMP biosynthesis via salvage pathway; UMP from uridine: step 1/1. The protein is Uridine kinase of Listeria welshimeri serovar 6b (strain ATCC 35897 / DSM 20650 / CCUG 15529 / CIP 8149 / NCTC 11857 / SLCC 5334 / V8).